Consider the following 121-residue polypeptide: Autophagy-related protein 8 (121 aa).

Glycine 116 is lipidated: Phosphatidylethanolamine amidated glycine. A propeptide spans 117–121 (removed in mature form); the sequence is DFETA.

Belongs to the ATG8 family. The C-terminal 5 residues are removed to expose Gly-116 at the C-terminus. The C-terminal Gly is then amidated with phosphatidylethanolamine by an activating system similar to that for ubiquitin.

The protein resides in the cytoplasmic vesicle. It is found in the autophagosome membrane. It localises to the vacuole membrane. Its function is as follows. Ubiquitin-like modifier involved in autophagosome formation. With cpr-1/atg4, mediates the delivery of the autophagosomes to the vacuole via the microtubule cytoskeleton. Required for selective autophagic degradation of the nucleus (nucleophagy) as well as for mitophagy which contributes to regulate mitochondrial quantity and quality by eliminating the mitochondria to a basal level to fulfill cellular energy requirements and preventing excess ROS production. Also participates in membrane fusion events that take place in the early secretory pathway. Also involved in endoplasmic reticulum-specific autophagic process and is essential for the survival of cells subjected to severe ER stress. The apg-6/atg8-PE conjugate mediates tethering between adjacent membranes and stimulates membrane hemifusion, leading to expansion of the autophagosomal membrane during autophagy. The sequence is that of Autophagy-related protein 8 (apg-6) from Neurospora crassa (strain ATCC 24698 / 74-OR23-1A / CBS 708.71 / DSM 1257 / FGSC 987).